A 397-amino-acid polypeptide reads, in one-letter code: Cystinosin (397 aa).

Positions 1–24 are cleaved as a signal peptide; the sequence is MDFSTHRLTTLLLLLLATVALGNA. The Lumenal segment spans residues 25–126; it reads QSSQLTVDSH…FVRVTVAKSR (102 aa). N-linked (GlcNAc...) asparagine glycans are attached at residues Asn43 and Asn86. The chain crosses the membrane as a helical span at residues 127–147; the sequence is ALIYTSIIFGWVYFVAWSVSF. The PQ-loop 1 domain maps to 132 to 187; the sequence is SIIFGWVYFVAWSVSFYPQIWSNYRRKSVEGLNFDFLALNIVGFTLYSMFNCGLYF. At 148–167 the chain is on the cytoplasmic side; that stretch reads YPQIWSNYRRKSVEGLNFDF. The chain crosses the membrane as a helical span at residues 168-188; it reads LALNIVGFTLYSMFNCGLYFI. At 189–210 the chain is on the lumenal side; it reads EDLQNEYEVRYPLGVNPVMLND. The helical transmembrane segment at 211–231 threads the bilayer; sequence VVFSLHAMFATCITILQCFFY. The Cytoplasmic segment spans residues 232–239; sequence QRAQQRVS. The helical transmembrane segment at 240–260 threads the bilayer; sequence FIAYGILAIFAVVVVVSAGLA. The Lumenal segment spans residues 261–263; the sequence is GGS. A helical membrane pass occupies residues 264–284; that stretch reads VIHWLDFLYYCSYVKLTITII. In terms of domain architecture, PQ-loop 2 spans 271 to 327; that stretch reads LYYCSYVKLTITIIKYVPQALMNYRRKSTSGWSIGNILLDFTGGTLSMLQMILNAHN. Residues 285 to 302 are Cytoplasmic-facing; it reads KYVPQALMNYRRKSTSGW. The chain crosses the membrane as a helical span at residues 303–323; it reads SIGNILLDFTGGTLSMLQMIL. Residues 324 to 340 are Lumenal-facing; it reads NAHNYDDWVSIFGDPTK. A helical transmembrane segment spans residues 341-361; the sequence is FGLGLFSVLFDVFFMLQHYVF. Residues 362–397 lie on the Cytoplasmic side of the membrane; the sequence is YRHSRESSSSDLTTVTDVQNRTNESPPPSEVTTEKY. Polar residues predominate over residues 373–385; sequence LTTVTDVQNRTNE. A disordered region spans residues 373–397; the sequence is LTTVTDVQNRTNESPPPSEVTTEKY.

This sequence belongs to the cystinosin family.

It is found in the lysosome membrane. It carries out the reaction L-cystine(out) + H(+)(out) = L-cystine(in) + H(+)(in). Its function is as follows. Cystine/H(+) symporter that mediates export of cystine, the oxidized dimer of cysteine, from lysosomes. Involved in cysteine homeostasis during periods of fasting, which indirectly regulates mTORC1-mediated signaling by supporting de novo CoA synthesis, the TCA cycle and amino acid metabolism during periods of food shortage. Important for maintaining autophagy, and for development and survival during periods of fasting. The chain is Cystinosin from Drosophila melanogaster (Fruit fly).